A 468-amino-acid polypeptide reads, in one-letter code: MAQAGSASPLFAVVLAAGKGTRMKSNRAKVLHTLCGVPMVNYVIGAIRPLVPERLLVVVGHQAEQVRAVLPEDAEPVLQPEQRGTGDAVRVALEAIPEEEGVLLVVNGDGPLISDRTLGELLERHRSAGVGATVLVAELPDPSGLGRVREDAGVVRITEERDATEAERRNRLCNLGLYAFELPELRRAIREISSGAGRGELYLTDVLEIIGRRSRAVTYRLKDLEEANLVNDRSQLARAEEILRRRILDAHMKEGVTVRDPVSTHIEASVEIGRDTVILPGTFLRGRTRIGSDCVIGPSTDLVDTVVEDGATVEHSVGRGARVGRGAAVGPYAYLRPGTVLEEGSKVGAFCEVKNTRVGARSKVPHLSYVGDAEIGEDANLGAGTITANYDGAKKHRTVIEDGAFTGINTNLIAPVTIGQGAYLGAGSVVNKDIPPGKLAVGAPARVIRDAPGARSSSGDRRRARTEG.

A pyrophosphorylase region spans residues 1–233 (MAQAGSASPL…LEEANLVNDR (233 aa)). UDP-N-acetyl-alpha-D-glucosamine is bound by residues 15 to 18 (LAAG), K29, Q79, and 84 to 85 (GT). Position 109 (D109) interacts with Mg(2+). Positions 146, 159, 174, and 231 each coordinate UDP-N-acetyl-alpha-D-glucosamine. N231 provides a ligand contact to Mg(2+). A linker region spans residues 234–254 (SQLARAEEILRRRILDAHMKE). Residues 255–468 (GVTVRDPVST…GDRRRARTEG (214 aa)) form an N-acetyltransferase region. UDP-N-acetyl-alpha-D-glucosamine contacts are provided by R336 and K354. H366 functions as the Proton acceptor in the catalytic mechanism. UDP-N-acetyl-alpha-D-glucosamine is bound by residues Y369 and N380. Residues A383, 389–390 (NY), and A426 contribute to the acetyl-CoA site.

The protein in the N-terminal section; belongs to the N-acetylglucosamine-1-phosphate uridyltransferase family. This sequence in the C-terminal section; belongs to the transferase hexapeptide repeat family. Homotrimer. The cofactor is Mg(2+).

Its subcellular location is the cytoplasm. It catalyses the reaction alpha-D-glucosamine 1-phosphate + acetyl-CoA = N-acetyl-alpha-D-glucosamine 1-phosphate + CoA + H(+). The catalysed reaction is N-acetyl-alpha-D-glucosamine 1-phosphate + UTP + H(+) = UDP-N-acetyl-alpha-D-glucosamine + diphosphate. It functions in the pathway nucleotide-sugar biosynthesis; UDP-N-acetyl-alpha-D-glucosamine biosynthesis; N-acetyl-alpha-D-glucosamine 1-phosphate from alpha-D-glucosamine 6-phosphate (route II): step 2/2. It participates in nucleotide-sugar biosynthesis; UDP-N-acetyl-alpha-D-glucosamine biosynthesis; UDP-N-acetyl-alpha-D-glucosamine from N-acetyl-alpha-D-glucosamine 1-phosphate: step 1/1. Its pathway is bacterial outer membrane biogenesis; LPS lipid A biosynthesis. Functionally, catalyzes the last two sequential reactions in the de novo biosynthetic pathway for UDP-N-acetylglucosamine (UDP-GlcNAc). The C-terminal domain catalyzes the transfer of acetyl group from acetyl coenzyme A to glucosamine-1-phosphate (GlcN-1-P) to produce N-acetylglucosamine-1-phosphate (GlcNAc-1-P), which is converted into UDP-GlcNAc by the transfer of uridine 5-monophosphate (from uridine 5-triphosphate), a reaction catalyzed by the N-terminal domain. This chain is Bifunctional protein GlmU, found in Rubrobacter xylanophilus (strain DSM 9941 / JCM 11954 / NBRC 16129 / PRD-1).